The primary structure comprises 268 residues: Tryptophan synthase alpha chain (268 aa).

Catalysis depends on proton acceptor residues E49 and D60.

This sequence belongs to the TrpA family. Tetramer of two alpha and two beta chains.

The catalysed reaction is (1S,2R)-1-C-(indol-3-yl)glycerol 3-phosphate + L-serine = D-glyceraldehyde 3-phosphate + L-tryptophan + H2O. The protein operates within amino-acid biosynthesis; L-tryptophan biosynthesis; L-tryptophan from chorismate: step 5/5. Functionally, the alpha subunit is responsible for the aldol cleavage of indoleglycerol phosphate to indole and glyceraldehyde 3-phosphate. This chain is Tryptophan synthase alpha chain, found in Escherichia coli O127:H6 (strain E2348/69 / EPEC).